Consider the following 82-residue polypeptide: MDPGPKGHCHCGGHGHPPGHCGPPPGHGPGPCGPPPHHGPGPCGPPPGHGPGPCGPPPHHGPGPCGPPPGHGPGHPPPGPHH.

Positions 20–82 (HCGPPPGHGP…PGHPPPGPHH (63 aa)) are disordered.

The chain is Proline, histidine and glycine-rich protein 1 (PHGR1) from Homo sapiens (Human).